Consider the following 578-residue polypeptide: ER degradation-enhancing alpha-mannosidase-like protein 2 (578 aa).

The N-terminal stretch at 1–21 (MPFRLLIPLGLLCALLPQHHG) is a signal peptide. N-linked (GlcNAc...) asparagine glycosylation is found at Asn-90, Asn-112, Asn-289, and Asn-450. A disordered region spans residues 517–557 (KNTVSSGPWEPPARPGTLFSPENHDQARERKPAKQKVPLLS). A compositionally biased stretch (basic and acidic residues) spans 538 to 548 (ENHDQARERKP).

Belongs to the glycosyl hydrolase 47 family. In terms of processing, N-glycosylated. Expressed ubiquitously in all tissues tested with slightly higher levels detected in small intestine and peripheral blood leukocytes and weakest levels in brain and skeletal muscle.

The protein resides in the endoplasmic reticulum lumen. Involved in the endoplasmic reticulum-associated degradation (ERAD) pathway that targets misfolded glycoproteins for degradation in an N-glycan-dependent manner. May initiate ERAD by promoting the first mannose trimming step of ERAD substrates, from Man9GlcNAc2 to Man8GlcNAc2. Seems to recognize and bind to exposed hydrophobic regions in target proteins. The sequence is that of ER degradation-enhancing alpha-mannosidase-like protein 2 (EDEM2) from Homo sapiens (Human).